We begin with the raw amino-acid sequence, 358 residues long: Malate dehydrogenase 2, glyoxysomal (358 aa).

The N-terminal 38 residues, 1 to 38, are a transit peptide targeting the glyoxysome; that stretch reads MEFRGDANKRIAMISAHLQPSFTPQMEAKNSVMGRENC. Residues 53-59 and D79 each bind NAD(+); that span reads GAAGGIG. Substrate-binding residues include R126 and R132. NAD(+) is bound by residues N139 and 162–164; that span reads ISN. Substrate contacts are provided by N164 and R198. The active-site Proton acceptor is H222. M273 is a binding site for NAD(+).

It belongs to the LDH/MDH superfamily. MDH type 1 family. As to quaternary structure, homodimer.

Its subcellular location is the glyoxysome. It catalyses the reaction (S)-malate + NAD(+) = oxaloacetate + NADH + H(+). This Brassica napus (Rape) protein is Malate dehydrogenase 2, glyoxysomal (MDH2).